The sequence spans 198 residues: MARCKS-related protein (198 aa).

The tract at residues 1 to 198 is disordered; the sequence is MGSQSSKAPR…DPAPASEQNE (198 aa). The N-myristoyl glycine moiety is linked to residue Gly-2. Thr-14 carries the phosphothreonine modification. A phosphoserine mark is found at Ser-22, Ser-36, Ser-41, and Ser-48. Residues 53–62 are compositionally biased toward low complexity; sequence GTEEAAGATG. Phosphoserine is present on Ser-71. Basic and acidic residues predominate over residues 76–85; that stretch reads AKGEVPPKET. Residue Thr-85 is modified to Phosphothreonine. Residues 86–98 show a composition bias toward basic residues; sequence PKKKKKFSFKKPF. The tract at residues 87 to 110 is effector domain involved in lipid-binding and calmodulin-binding; that stretch reads KKKKKFSFKKPFKLSGLSFKRNRK. A phosphoserine; by PKC mark is found at Ser-93, Ser-101, and Ser-104. At Ser-119 the chain carries Phosphoserine. Position 120 is a phosphoserine; by MAPK8 (Ser-120). Ser-132 carries the phosphoserine modification. At Thr-148 the chain carries Phosphothreonine; by MAPK8. A phosphoserine mark is found at Ser-151 and Ser-162. Residues 156–167 are compositionally biased toward low complexity; the sequence is AKGAEASAAAKG. Thr-170 bears the Phosphothreonine mark. At Thr-182 the chain carries Phosphothreonine; by MAPK8.

This sequence belongs to the MARCKS family. As to quaternary structure, binds to filamentous actin (F-actin), but not to monomeric G-actin, independently of its phosphorylation status. Interacts with calmodulin. Post-translationally, phosphorylated. Phosphorylation at Ser-120 and Thr-182 is non-redundantly catalyzed by MAPK8 in vivo. Phosphorylation at Thr-148 is preferentially catalyzed by MAPK8 in vivo, but this modification can also be catalyzed by other kinases in the absence of MAPK8. May be phosphorylated by protein kinase C, which disrupts the interaction with calmodulin.

It localises to the cytoplasm. The protein localises to the cytoskeleton. Its subcellular location is the cell membrane. In terms of biological role, controls cell movement by regulating actin cytoskeleton homeostasis and filopodium and lamellipodium formation. When unphosphorylated, induces cell migration. When phosphorylated by MAPK8, induces actin bundles formation and stabilization, thereby reducing actin plasticity, hence restricting cell movement, including neuronal migration. May be involved in coupling the protein kinase C and calmodulin signal transduction systems. The chain is MARCKS-related protein (MARCKSL1) from Bos taurus (Bovine).